A 61-amino-acid chain; its full sequence is U-poneritoxin(01)-Om5a (61 aa).

An N-terminal signal peptide occupies residues 1–23 (MKLSALSLAFAIILMMTIMYTKA). The propeptide occupies 24 to 41 (DADASADAEADADAEAEA). Position 59 is a glutamine amide (glutamine 59).

This sequence belongs to the formicidae venom precursor-01 superfamily. In terms of processing, truncated sequences of this peptide have also been found in the venom. It is possible they have been cleaved in the venom. Expressed by the venom gland.

It localises to the secreted. Acidic peptide with potent hemolytic activities (94.8% at 50 uM). It also shows low antimicrobial activities against E.coli (MIC=50uM), as well as histamine-releasing activity (28.3% at 10 uM). Does not have activity against S.aureus, and S.cerevisiae. This Odontomachus monticola (Trap-jaw ant) protein is U-poneritoxin(01)-Om5a.